We begin with the raw amino-acid sequence, 415 residues long: Protein ROH1A (415 aa).

The disordered stretch occupies residues 184-219 (VSGGGGGGGGGNKTTERSWSFGRRSGGSSAASKGGA). Residues 185–195 (SGGGGGGGGGN) show a composition bias toward gly residues. The span at 200–219 (RSWSFGRRSGGSSAASKGGA) shows a compositional bias: low complexity. The chain crosses the membrane as a helical span at residues 263–283 (MFIMSTVMVFVMWVLTAAVPC).

The protein belongs to the ROH1 family. Interacts with EXO70A1 and EXO70C1. Binds to EXO70C2. Mainly expressed in cells expanding in a polar manner such as pollen and root hairs.

Its subcellular location is the membrane. It localises to the cytoplasm. The protein localises to the cytosol. In terms of biological role, required for seed coat mucilage deposition. The polypeptide is Protein ROH1A (Arabidopsis thaliana (Mouse-ear cress)).